Reading from the N-terminus, the 175-residue chain is Pituitary adenylate cyclase-activating polypeptide (175 aa).

Residues 1–24 form the signal peptide; that stretch reads MTMCSGARLALLVYGIIMHSSVSC. The propeptide occupies 25–78; it reads SPAAGLSFPGIRPEDEAYDQDGNPLQDFYDWDPPGVGSPASALRDAYALYYPAD. The important for receptor binding stretch occupies residues 149 to 157; the sequence is VKKYLAAVL. Leu157 is subject to Leucine amide. Lys168 is modified (lysine amide). The propeptide occupies 172–175; it reads IAYL.

The protein belongs to the glucagon family.

It localises to the secreted. Its function is as follows. PACAP is a neuropeptide involved in diverse array of physiological processes through activating the PACAP subfamily of class B1 G protein-coupled receptors: VIP receptor 1 (VIPR1), VIP receptor 2 (VIPR2), and PACAP type I receptor (ADCYAP1R1). Exerts neuroprotective and general cytoprotective effects due to anti-apoptotic, anti-inflammatory, and antioxidant actions. Promotes neuron projection development through the RAPGEF2/Rap1/B-Raf/ERK pathway. In chromaffin cells, induces long-lasting increase of intracellular calcium concentrations and neuroendocrine secretion. Involved in the control of glucose homeostasis, induces insulin secretion by pancreatic beta cells. PACAP exists in two bioactive forms from proteolysis of the same precursor protein, PACAP27 and PACAP38, which differ by eleven amino acid residues in the C-terminus. The chain is Pituitary adenylate cyclase-activating polypeptide from Mus musculus (Mouse).